The sequence spans 611 residues: Zinc metalloproteinase nas-31 (611 aa).

The N-terminal stretch at 1 to 17 is a signal peptide; the sequence is MILQLLFYSLFTHLAVS. Residues 18–158 constitute a propeptide that is removed on maturation; the sequence is QIDVNQALNQ…TVSTASRARR (141 aa). N-linked (GlcNAc...) asparagine glycans are attached at residues N53 and N67. Over residues 82–95 the composition is skewed to polar residues; it reads NAGTNQENGATEQQ. The disordered stretch occupies residues 82 to 103; sequence NAGTNQENGATEQQKPLREKPR. The region spanning 159 to 354 is the Peptidase M12A domain; the sequence is QAYRDRYYPS…SMMNEHYKCK (196 aa). N200 is a glycosylation site (N-linked (GlcNAc...) asparagine). Disulfide bonds link C203–C353, C224–C243, C357–C376, C379–C390, C397–C428, C455–C476, C532–C564, C539–C557, and C548–C561. Position 251 (H251) interacts with Zn(2+). Residue E252 is part of the active site. H255 and H261 together coordinate Zn(2+). Residues 340 to 396 enclose the EGF-like domain; the sequence is GFYDISMMNEHYKCKELCPAASSAQCKNGGFPSPRNCAICICPSGYGGILCDQRPPG. Residues 397–516 enclose the CUB domain; the sequence is CGDSVTATTT…LEYRAVTPSV (120 aa). An N-linked (GlcNAc...) asparagine glycan is attached at N424. Positions 532–564 constitute a ShKT domain; it reads CQDLHPNCDFYKFFGMCRSKKIRSNCKFTCHDC.

Requires Zn(2+) as cofactor. Expressed in excretory cell and in amphid and phasmid sheath glia.

The protein localises to the secreted. Its function is as follows. Metalloprotease. This chain is Zinc metalloproteinase nas-31 (nas-31), found in Caenorhabditis elegans.